A 521-amino-acid polypeptide reads, in one-letter code: Glucose-1-phosphate adenylyltransferase large subunit 3, chloroplastic (521 aa).

A chloroplast-targeting transit peptide spans 1–61 (MDSCCNFSLG…RKLRPGVAYA (61 aa)).

The protein belongs to the bacterial/plant glucose-1-phosphate adenylyltransferase family. Heterotetramer. As to expression, probably are expressed in roots, flowers and/or seeds.

It is found in the plastid. Its subcellular location is the chloroplast. It catalyses the reaction alpha-D-glucose 1-phosphate + ATP + H(+) = ADP-alpha-D-glucose + diphosphate. It participates in glycan biosynthesis; starch biosynthesis. With respect to regulation, activated by 3'phosphoglycerate, inhibited by orthophosphate. Allosteric regulation. Its function is as follows. This protein plays a role in synthesis of starch. It catalyzes the synthesis of the activated glycosyl donor, ADP-glucose from Glc-1-P and ATP. This Arabidopsis thaliana (Mouse-ear cress) protein is Glucose-1-phosphate adenylyltransferase large subunit 3, chloroplastic (APL3).